The primary structure comprises 133 residues: uncharacterized protein (133 aa).

The region spanning 3–106 (IFTKIINREL…PTRSLSDFGF (104 aa)) is the HIT domain. Positions 90–94 (HLHIH) match the Histidine triad motif motif.

This is an uncharacterized protein from Mycobacterium tuberculosis (strain ATCC 25618 / H37Rv).